The chain runs to 329 residues: MSAPNCARKYDIARLSSLNFQISQYVYLSLISLTFIFSYFAVKIVHQKSIFQLSTKILLFHNLVSANLHQLLYLFSALRRLNLAYFYIDEPCVPLISEADCLPYLKVLVTGISGMIYGQTGLLLERGCATFIKDYDKKTSMFVGIAISIAILFLSLITGKIIIWDDPLQGYLLSCVSYPSQSVERSRLFASIYTFISSFNLVFSVLLRRYNKKLEYSTPFVVGPRFRKREVIDSTSTICFLTFVQFIFMFIYSFGIFTLKTIRSMLTYRQYYFIVVWFYTIPFIAALFPILLVYRIRSSHVSRVTIIKTFTKTKQTQEEHIKQLKNVWN.

7 consecutive transmembrane segments (helical) span residues 25–45, 57–77, 104–124, 143–163, 187–207, 237–257, and 273–293; these read YVYLSLISLTFIFSYFAVKIV, ILLFHNLVSANLHQLLYLFSA, YLKVLVTGISGMIYGQTGLLL, VGIAISIAILFLSLITGKIII, RLFASIYTFISSFNLVFSVLL, TICFLTFVQFIFMFIYSFGIF, and FIVVWFYTIPFIAALFPILLV.

Belongs to the nematode receptor-like protein sra family.

It localises to the membrane. The sequence is that of Serpentine receptor class alpha-7 (sra-7) from Caenorhabditis elegans.